The following is a 251-amino-acid chain: CDP-diacylglycerol pyrophosphatase (251 aa).

Residues 5 to 25 form a helical membrane-spanning segment; that stretch reads GYFLLAVIVIVAAAGVGYWKF.

This sequence belongs to the Cdh family.

The protein resides in the cell inner membrane. It carries out the reaction a CDP-1,2-diacyl-sn-glycerol + H2O = a 1,2-diacyl-sn-glycero-3-phosphate + CMP + 2 H(+). It functions in the pathway phospholipid metabolism; CDP-diacylglycerol degradation; phosphatidate from CDP-diacylglycerol: step 1/1. This Salmonella typhi protein is CDP-diacylglycerol pyrophosphatase.